Reading from the N-terminus, the 173-residue chain is Bifunctional protein PyrR (173 aa).

Residues 93-105 (IILVDDVLYTGRT) carry the PRPP-binding motif.

This sequence belongs to the purine/pyrimidine phosphoribosyltransferase family. PyrR subfamily. Homodimer and homohexamer; in equilibrium.

It catalyses the reaction UMP + diphosphate = 5-phospho-alpha-D-ribose 1-diphosphate + uracil. Regulates transcriptional attenuation of the pyrimidine nucleotide (pyr) operon by binding in a uridine-dependent manner to specific sites on pyr mRNA. This disrupts an antiterminator hairpin in the RNA and favors formation of a downstream transcription terminator, leading to a reduced expression of downstream genes. Its function is as follows. Also displays a weak uracil phosphoribosyltransferase activity which is not physiologically significant. The polypeptide is Bifunctional protein PyrR (Streptococcus equi subsp. zooepidemicus (strain H70)).